The primary structure comprises 417 residues: UDP-N-acetylglucosamine 1-carboxyvinyltransferase 3 (417 aa).

Position 22 to 23 (22 to 23 (KN)) interacts with phosphoenolpyruvate. Residue Arg92 coordinates UDP-N-acetyl-alpha-D-glucosamine. The active-site Proton donor is Cys116. Cys116 bears the 2-(S-cysteinyl)pyruvic acid O-phosphothioketal mark. Residues 121 to 125 (RPIDQ), Asp304, and Ile326 contribute to the UDP-N-acetyl-alpha-D-glucosamine site.

The protein belongs to the EPSP synthase family. MurA subfamily.

It localises to the cytoplasm. It carries out the reaction phosphoenolpyruvate + UDP-N-acetyl-alpha-D-glucosamine = UDP-N-acetyl-3-O-(1-carboxyvinyl)-alpha-D-glucosamine + phosphate. The protein operates within cell wall biogenesis; peptidoglycan biosynthesis. Functionally, cell wall formation. Adds enolpyruvyl to UDP-N-acetylglucosamine. In Caldanaerobacter subterraneus subsp. tengcongensis (strain DSM 15242 / JCM 11007 / NBRC 100824 / MB4) (Thermoanaerobacter tengcongensis), this protein is UDP-N-acetylglucosamine 1-carboxyvinyltransferase 3.